Here is a 791-residue protein sequence, read N- to C-terminus: Pleckstrin homology domain-containing family H member 3 (791 aa).

An N-terminal signal peptide occupies residues 1–18 (MPLPGGLWWLLCCRRGFT). Positions 29-41 (LSGDGDEDEDDET) are enriched in acidic residues. The tract at residues 29-71 (LSGDGDEDEDDETFELRSPSPAGGGRGSLDVTLTQPTRNGPIT) is disordered. A Phosphoserine modification is found at Ser30. Residues 59–71 (VTLTQPTRNGPIT) show a composition bias toward polar residues. The 105-residue stretch at 95–199 (DVIVKGWLYR…WGVALREVIA (105 aa)) folds into the PH domain. Positions 237–399 (HTSSALYAPL…PSLAEISALS (163 aa)) constitute a MyTH4 domain. Residues 404-755 (LLCTVHCPGA…ANPSPERPCS (352 aa)) form the FERM domain. Positions 549–559 (PRGPLPLLDRL) are enriched in low complexity. 2 disordered regions span residues 549–580 (PRGP…PPPS) and 593–623 (LAKR…GGGS). The segment covering 594 to 605 (AKRRAERARRIG) has biased composition (basic residues). The residue at position 636 (Arg636) is an Omega-N-methylarginine. The segment at 748–791 (PSPERPCSSSGPPSQDLSDTSPPSQHQVLEKPQGQSGCLRQLQD) is disordered. Over residues 754 to 791 (CSSSGPPSQDLSDTSPPSQHQVLEKPQGQSGCLRQLQD) the composition is skewed to polar residues.

The chain is Pleckstrin homology domain-containing family H member 3 (Plekhh3) from Rattus norvegicus (Rat).